Here is a 391-residue protein sequence, read N- to C-terminus: Multidrug resistance protein MdtL (391 aa).

Transmembrane regions (helical) follow at residues 4–24 (FLIC…MYLV), 42–62 (IAFS…GKVA), 69–89 (PVAI…SLAE), 93–113 (LFLA…VVAF), 134–154 (GITC…MLNF), 158–178 (SLFW…LFIL), 203–222 (FFLS…LTFV), 245–265 (ALTA…LGIF), 269–289 (TLMI…AVSP), 293–313 (VSLF…GVAM), 331–351 (LGIA…VVGI), and 356–376 (MLIG…MFVA).

Belongs to the major facilitator superfamily. DHA1 family. MdtL (TC 2.A.1.2.22) subfamily.

It is found in the cell inner membrane. Its function is as follows. Confers resistance to chloramphenicol. This Escherichia coli O81 (strain ED1a) protein is Multidrug resistance protein MdtL.